We begin with the raw amino-acid sequence, 273 residues long: Ribosomal RNA small subunit methyltransferase A (273 aa).

Residues Asn-18, Leu-20, Gly-45, Glu-66, Asp-91, and Asn-113 each coordinate S-adenosyl-L-methionine.

Belongs to the class I-like SAM-binding methyltransferase superfamily. rRNA adenine N(6)-methyltransferase family. RsmA subfamily.

It localises to the cytoplasm. It carries out the reaction adenosine(1518)/adenosine(1519) in 16S rRNA + 4 S-adenosyl-L-methionine = N(6)-dimethyladenosine(1518)/N(6)-dimethyladenosine(1519) in 16S rRNA + 4 S-adenosyl-L-homocysteine + 4 H(+). Its function is as follows. Specifically dimethylates two adjacent adenosines (A1518 and A1519) in the loop of a conserved hairpin near the 3'-end of 16S rRNA in the 30S particle. May play a critical role in biogenesis of 30S subunits. This is Ribosomal RNA small subunit methyltransferase A from Escherichia coli O139:H28 (strain E24377A / ETEC).